The following is a 356-amino-acid chain: Histidinol-phosphate aminotransferase (356 aa).

Lys222 is subject to N6-(pyridoxal phosphate)lysine.

This sequence belongs to the class-II pyridoxal-phosphate-dependent aminotransferase family. Histidinol-phosphate aminotransferase subfamily. As to quaternary structure, homodimer. It depends on pyridoxal 5'-phosphate as a cofactor.

It catalyses the reaction L-histidinol phosphate + 2-oxoglutarate = 3-(imidazol-4-yl)-2-oxopropyl phosphate + L-glutamate. It functions in the pathway amino-acid biosynthesis; L-histidine biosynthesis; L-histidine from 5-phospho-alpha-D-ribose 1-diphosphate: step 7/9. In Lactiplantibacillus plantarum (strain ATCC BAA-793 / NCIMB 8826 / WCFS1) (Lactobacillus plantarum), this protein is Histidinol-phosphate aminotransferase.